The chain runs to 330 residues: DNA-directed RNA polymerase subunit alpha (330 aa).

The tract at residues methionine 1–arginine 236 is alpha N-terminal domain (alpha-NTD). Residues phenylalanine 250 to aspartate 330 form an alpha C-terminal domain (alpha-CTD) region.

Belongs to the RNA polymerase alpha chain family. Homodimer. The RNAP catalytic core consists of 2 alpha, 1 beta, 1 beta' and 1 omega subunit. When a sigma factor is associated with the core the holoenzyme is formed, which can initiate transcription.

It carries out the reaction RNA(n) + a ribonucleoside 5'-triphosphate = RNA(n+1) + diphosphate. In terms of biological role, DNA-dependent RNA polymerase catalyzes the transcription of DNA into RNA using the four ribonucleoside triphosphates as substrates. This chain is DNA-directed RNA polymerase subunit alpha, found in Vibrio vulnificus (strain CMCP6).